The following is a 305-amino-acid chain: Glycine--tRNA ligase alpha subunit (305 aa).

This sequence belongs to the class-II aminoacyl-tRNA synthetase family. As to quaternary structure, tetramer of two alpha and two beta subunits.

The protein localises to the cytoplasm. It carries out the reaction tRNA(Gly) + glycine + ATP = glycyl-tRNA(Gly) + AMP + diphosphate. The sequence is that of Glycine--tRNA ligase alpha subunit from Vibrio parahaemolyticus serotype O3:K6 (strain RIMD 2210633).